We begin with the raw amino-acid sequence, 205 residues long: Small ribosomal subunit protein uS4 (205 aa).

Residues 27–46 (LNKRDYAPGQHGQRRKGKPS) form a disordered region. The 61-residue stretch at 118–178 (HGHVLVNGKR…HVDHRLMKGT (61 aa)) folds into the S4 RNA-binding domain.

This sequence belongs to the universal ribosomal protein uS4 family. In terms of assembly, part of the 30S ribosomal subunit. Contacts protein S5. The interaction surface between S4 and S5 is involved in control of translational fidelity.

Functionally, one of the primary rRNA binding proteins, it binds directly to 16S rRNA where it nucleates assembly of the body of the 30S subunit. With S5 and S12 plays an important role in translational accuracy. This chain is Small ribosomal subunit protein uS4, found in Granulibacter bethesdensis (strain ATCC BAA-1260 / CGDNIH1).